A 786-amino-acid polypeptide reads, in one-letter code: Mitochondrial intermediate peptidase (786 aa).

The N-terminal 29 residues, 1 to 29 (MSSILLRSYRHHAKVWTRPSSKSSFIRSL), are a transit peptide targeting the mitochondrion. His567 lines the Zn(2+) pocket. The active site involves Glu568. Residues His571 and His574 each contribute to the Zn(2+) site.

The protein belongs to the peptidase M3 family. Requires Zn(2+) as cofactor.

The protein localises to the mitochondrion matrix. It catalyses the reaction Release of an N-terminal octapeptide as second stage of processing of some proteins imported into the mitochondrion.. Cleaves proteins, imported into the mitochondrion, to their mature size. While most mitochondrial precursor proteins are processed to the mature form in one step by mitochondrial processing peptidase (MPP), the sequential cleavage by MIP of an octapeptide after initial processing by MPP is a required step for a subgroup of nuclear-encoded precursor proteins destined for the matrix or the inner membrane. This Meyerozyma guilliermondii (strain ATCC 6260 / CBS 566 / DSM 6381 / JCM 1539 / NBRC 10279 / NRRL Y-324) (Yeast) protein is Mitochondrial intermediate peptidase (OCT1).